A 245-amino-acid chain; its full sequence is Probable transcriptional regulatory protein NSE_0641 (245 aa).

Residues 1–22 (MAGHSQYANIKHRKNAQDAKRA) form a disordered region.

The protein belongs to the TACO1 family.

The protein localises to the cytoplasm. The polypeptide is Probable transcriptional regulatory protein NSE_0641 (Neorickettsia sennetsu (strain ATCC VR-367 / Miyayama) (Ehrlichia sennetsu)).